Consider the following 201-residue polypeptide: Urease accessory protein UreG (201 aa).

11–18 is a GTP binding site; it reads GPVGSGKT.

It belongs to the SIMIBI class G3E GTPase family. UreG subfamily. Homodimer. UreD, UreF and UreG form a complex that acts as a GTP-hydrolysis-dependent molecular chaperone, activating the urease apoprotein by helping to assemble the nickel containing metallocenter of UreC. The UreE protein probably delivers the nickel.

Its subcellular location is the cytoplasm. Facilitates the functional incorporation of the urease nickel metallocenter. This process requires GTP hydrolysis, probably effectuated by UreG. The polypeptide is Urease accessory protein UreG (Prochlorococcus marinus subsp. pastoris (strain CCMP1986 / NIES-2087 / MED4)).